We begin with the raw amino-acid sequence, 255 residues long: tRNA (guanine-N(7)-)-methyltransferase (255 aa).

A disordered region spans residues M1–N30. A compositionally biased stretch (acidic residues) spans A17–D27. S-adenosyl-L-methionine-binding residues include E86, E111, D138, and D161. D161 is an active-site residue. Residues K165, D197, and T232–E235 contribute to the substrate site.

This sequence belongs to the class I-like SAM-binding methyltransferase superfamily. TrmB family.

The enzyme catalyses guanosine(46) in tRNA + S-adenosyl-L-methionine = N(7)-methylguanosine(46) in tRNA + S-adenosyl-L-homocysteine. Its pathway is tRNA modification; N(7)-methylguanine-tRNA biosynthesis. Functionally, catalyzes the formation of N(7)-methylguanine at position 46 (m7G46) in tRNA. The sequence is that of tRNA (guanine-N(7)-)-methyltransferase from Burkholderia vietnamiensis (strain G4 / LMG 22486) (Burkholderia cepacia (strain R1808)).